The following is a 466-amino-acid chain: ATP synthase subunit beta (466 aa).

156–163 (GGAGVGKT) is an ATP binding site.

The protein belongs to the ATPase alpha/beta chains family. In terms of assembly, F-type ATPases have 2 components, CF(1) - the catalytic core - and CF(0) - the membrane proton channel. CF(1) has five subunits: alpha(3), beta(3), gamma(1), delta(1), epsilon(1). CF(0) has three main subunits: a(1), b(2) and c(9-12). The alpha and beta chains form an alternating ring which encloses part of the gamma chain. CF(1) is attached to CF(0) by a central stalk formed by the gamma and epsilon chains, while a peripheral stalk is formed by the delta and b chains.

The protein resides in the cell inner membrane. The enzyme catalyses ATP + H2O + 4 H(+)(in) = ADP + phosphate + 5 H(+)(out). Its function is as follows. Produces ATP from ADP in the presence of a proton gradient across the membrane. The catalytic sites are hosted primarily by the beta subunits. This is ATP synthase subunit beta from Dechloromonas aromatica (strain RCB).